Reading from the N-terminus, the 319-residue chain is MKPEKKLPVLDLISAEMKTVVNTLQPDLPPWPATGTIAEQRQYYTLERRFWNAGAPEMATRAYMVPTKYGQVETRLFCPQPDSPATLFYLHGGGFILGNLDTHDRIMRLLASYSQCTVIGIDYTLSPEARFPQAIEEIVAACCYFHQQAEDYQINMSRIGFAGDSAGAMLALASALWLRDKQIDCGKVAGVLLWYGLYGLRDSVTRRLLGGVWDGLTQQDLQMYEEAYLSNDADRESPYYCLFNNDLTREVPPCFIAGAEFDPLLDDSRLLYQTLAAHQQPCEFKLYPGTLHAFLHYSRMMKTADEALRDGAQFFTAQL.

The Involved in the stabilization of the negatively charged intermediate by the formation of the oxyanion hole motif lies at 91-93 (HGG). Residues Ser165, Asp262, and His292 contribute to the active site.

It belongs to the 'GDXG' lipolytic enzyme family. Homodimer. Interacts with MalT and MelA.

Its subcellular location is the cytoplasm. Its function is as follows. Displays esterase activity towards short chain fatty esters (acyl chain length of up to 8 carbons). Able to hydrolyze triacetylglycerol (triacetin) and tributyrylglycerol (tributyrin), but not trioleylglycerol (triolein) or cholesterol oleate. Negatively regulates MalT activity by antagonizing maltotriose binding. Inhibits MelA galactosidase activity. The chain is Acetyl esterase from Escherichia coli O17:K52:H18 (strain UMN026 / ExPEC).